A 195-amino-acid chain; its full sequence is Rubrerythrin-1 (195 aa).

The Ferritin-like diiron domain occupies 3–150 (SLKGTKTAEN…ALLKNIEENK (148 aa)). Fe(3+) contacts are provided by Glu-20, Glu-53, Glu-98, Glu-101, Glu-132, His-135, Cys-162, Cys-165, Cys-178, and Cys-181. Positions 157–191 (VKFWKCIKCGYIFEGKTAPKVCPACLHPQAYFEIL) constitute a Rubredoxin-like domain.

As to quaternary structure, homodimer. Fe(3+) serves as cofactor.

It carries out the reaction H2O2 + NADH + H(+) = NAD(+) + 2 H2O. With respect to regulation, rubredoxin (Rd) increases the NADH consumption rate by serving as an intermediary electron-transfer shuttle between NROR and RubY. Functionally, functions as the terminal component of an NADH peroxidase (NADH:H(2)O(2) oxidoreductase) when using NADH:rubredoxin oxidoreductase (NROR) as the electron transport intermediary from NADH to RubY. The chain is Rubrerythrin-1 (rbr1) from Clostridium acetobutylicum (strain ATCC 824 / DSM 792 / JCM 1419 / IAM 19013 / LMG 5710 / NBRC 13948 / NRRL B-527 / VKM B-1787 / 2291 / W).